The sequence spans 138 residues: Large ribosomal subunit protein uL16 (138 aa).

A compositionally biased stretch (basic residues) spans 1–17 (MLIPRKVKHRKQHHPRQ). The disordered stretch occupies residues 1-24 (MLIPRKVKHRKQHHPRQRGIASGG).

Belongs to the universal ribosomal protein uL16 family. In terms of assembly, part of the 50S ribosomal subunit.

Its function is as follows. Binds 23S rRNA and is also seen to make contacts with the A and possibly P site tRNAs. This chain is Large ribosomal subunit protein uL16, found in Mycobacterium ulcerans (strain Agy99).